The chain runs to 754 residues: 5-methyltetrahydropteroyltriglutamate--homocysteine methyltransferase (754 aa).

5-methyltetrahydropteroyltri-L-glutamate-binding positions include 15-18 (RELK) and lysine 114. L-homocysteine is bound by residues 430–432 (IGS) and glutamate 483. L-methionine is bound by residues 430–432 (IGS) and glutamate 483. 5-methyltetrahydropteroyltri-L-glutamate-binding positions include 514 to 515 (RC) and tryptophan 560. Aspartate 598 contributes to the L-homocysteine binding site. Aspartate 598 serves as a coordination point for L-methionine. Glutamate 604 serves as a coordination point for 5-methyltetrahydropteroyltri-L-glutamate. Residues histidine 641, cysteine 643, and glutamate 665 each contribute to the Zn(2+) site. Histidine 694 acts as the Proton donor in catalysis. Cysteine 726 contacts Zn(2+).

The protein belongs to the vitamin-B12 independent methionine synthase family. It depends on Zn(2+) as a cofactor.

It carries out the reaction 5-methyltetrahydropteroyltri-L-glutamate + L-homocysteine = tetrahydropteroyltri-L-glutamate + L-methionine. Its pathway is amino-acid biosynthesis; L-methionine biosynthesis via de novo pathway; L-methionine from L-homocysteine (MetE route): step 1/1. Its function is as follows. Catalyzes the transfer of a methyl group from 5-methyltetrahydrofolate to homocysteine resulting in methionine formation. The chain is 5-methyltetrahydropteroyltriglutamate--homocysteine methyltransferase from Campylobacter jejuni subsp. jejuni serotype O:23/36 (strain 81-176).